The chain runs to 1049 residues: Carbamoyl phosphate synthase large chain (1049 aa).

The segment at 1–399 (MRESVRKVLV…SLQKAVRMLD (399 aa)) is carboxyphosphate synthetic domain. The ATP site is built by R127, R167, G173, G174, K206, L208, E213, G239, V240, H241, Q282, and E296. Residues 131-325 (RETMINVGLP…LAYVSAKLAL (195 aa)) form the ATP-grasp 1 domain. Positions 282, 296, and 298 each coordinate Mg(2+). Mn(2+) contacts are provided by Q282, E296, and N298. The interval 400 to 548 (IGEPGVVGGK…LTYNGTEDDI (149 aa)) is oligomerization domain. The interval 549–930 (EFSEAGNKLL…LKSWLSSSPN (382 aa)) is carbamoyl phosphate synthetic domain. An ATP-grasp 2 domain is found at 674-864 (SKLLDKLGIK…IISLALDGIL (191 aa)). Positions 710, 749, 751, 756, 780, 781, 782, 783, 823, and 835 each coordinate ATP. Mg(2+)-binding residues include Q823, E835, and N837. Mn(2+)-binding residues include Q823, E835, and N837. Positions 930-1049 (NKIPNKEGIA…YEISEYGAGI (120 aa)) constitute an MGS-like domain. Residues 931 to 1049 (KIPNKEGIAL…YEISEYGAGI (119 aa)) are allosteric domain.

Belongs to the CarB family. Composed of two chains; the small (or glutamine) chain promotes the hydrolysis of glutamine to ammonia, which is used by the large (or ammonia) chain to synthesize carbamoyl phosphate. Tetramer of heterodimers (alpha,beta)4. Requires Mg(2+) as cofactor. The cofactor is Mn(2+).

The enzyme catalyses hydrogencarbonate + L-glutamine + 2 ATP + H2O = carbamoyl phosphate + L-glutamate + 2 ADP + phosphate + 2 H(+). It carries out the reaction hydrogencarbonate + NH4(+) + 2 ATP = carbamoyl phosphate + 2 ADP + phosphate + 2 H(+). Its pathway is amino-acid biosynthesis; L-arginine biosynthesis; carbamoyl phosphate from bicarbonate: step 1/1. It participates in pyrimidine metabolism; UMP biosynthesis via de novo pathway; (S)-dihydroorotate from bicarbonate: step 1/3. Functionally, large subunit of the glutamine-dependent carbamoyl phosphate synthetase (CPSase). CPSase catalyzes the formation of carbamoyl phosphate from the ammonia moiety of glutamine, carbonate, and phosphate donated by ATP, constituting the first step of 2 biosynthetic pathways, one leading to arginine and/or urea and the other to pyrimidine nucleotides. The large subunit (synthetase) binds the substrates ammonia (free or transferred from glutamine from the small subunit), hydrogencarbonate and ATP and carries out an ATP-coupled ligase reaction, activating hydrogencarbonate by forming carboxy phosphate which reacts with ammonia to form carbamoyl phosphate. This is Carbamoyl phosphate synthase large chain from Sulfurisphaera tokodaii (strain DSM 16993 / JCM 10545 / NBRC 100140 / 7) (Sulfolobus tokodaii).